Reading from the N-terminus, the 293-residue chain is ELMO domain-containing protein 2 (293 aa).

The 157-residue stretch at 126–282 (QHEKLLIKLW…KFHEKIKGLL (157 aa)) folds into the ELMO domain.

Acts as a GTPase-activating protein (GAP) toward guanine nucleotide exchange factors like ARL2, ARL3, ARF1 and ARF6, but not for GTPases outside the Arf family. The chain is ELMO domain-containing protein 2 (ELMOD2) from Bos taurus (Bovine).